The following is a 113-amino-acid chain: PTS system fructose-like EIIB component 3 (113 aa).

Residues 1–100 (MAYLVAVTAC…PQRVMSAVRK (100 aa)) form the PTS EIIB type-2 domain. Residue C10 is the Phosphocysteine intermediate of the active site. C10 is modified (phosphocysteine; by EIIA).

The protein resides in the cytoplasm. It catalyses the reaction D-fructose(out) + N(pros)-phospho-L-histidyl-[protein] = D-fructose 1-phosphate(in) + L-histidyl-[protein]. The phosphoenolpyruvate-dependent sugar phosphotransferase system (sugar PTS), a major carbohydrate active transport system, catalyzes the phosphorylation of incoming sugar substrates concomitantly with their translocation across the cell membrane. The polypeptide is PTS system fructose-like EIIB component 3 (frwD) (Escherichia coli (strain K12)).